The primary structure comprises 498 residues: Glycylpeptide N-tetradecanoyltransferase 2 (498 aa).

The disordered stretch occupies residues 1–88; sequence MAEDSESAAS…QPSKNPSVPM (88 aa). Over residues 15-32 the composition is skewed to acidic residues; that stretch reads ELDDQDTCGIDGDNEEET. Phosphoserine is present on Ser38. The segment covering 45 to 57 has biased composition (basic residues); the sequence is AKKKKKKQKRKKE. A compositionally biased stretch (polar residues) spans 61 to 86; sequence SGGTKSDSASDSQEIKIQQPSKNPSV. 8 residues coordinate tetradecanoyl-CoA: His117, Trp122, Leu250, Val252, Ser258, Arg260, Val261, and Ala262.

It belongs to the NMT family.

It localises to the cytoplasm. Its subcellular location is the membrane. The enzyme catalyses N-terminal glycyl-[protein] + tetradecanoyl-CoA = N-tetradecanoylglycyl-[protein] + CoA + H(+). It catalyses the reaction N-terminal glycyl-L-lysyl-[protein] + tetradecanoyl-CoA = N-terminal glycyl-(N(6)-tetradecanoyl)-L-lysyl-[protein] + CoA + H(+). Adds a myristoyl group to the N-terminal glycine residue of certain cellular and viral proteins. Also able to mediate N-terminal lysine myristoylation of proteins: catalyzes myristoylation of ARF6 on both 'Gly-2' and 'Lys-3'. Lysine myristoylation is required to maintain ARF6 on membranes during the GTPase cycle. In Homo sapiens (Human), this protein is Glycylpeptide N-tetradecanoyltransferase 2.